Here is a 485-residue protein sequence, read N- to C-terminus: Heat stress transcription factor A-1d (485 aa).

Disordered stretches follow at residues 1–34 (MDVS…SSNA) and 126–149 (RRKP…QNSS). Residues 35 to 129 (PPPFLSKTYD…LLQSITRRKP (95 aa)) mediate DNA binding. Over residues 136–146 (GHQRSQHSNGQ) the composition is skewed to low complexity. The segment at 152–218 (ACVEVGKFGL…QLMSFLAKAV (67 aa)) is hydrophobic repeat HR-A/B. Disordered stretches follow at residues 229-269 (QQQN…GQIV) and 436-461 (PVPD…DKTK). A Bipartite nuclear localization signal motif is present at residues 238 to 252 (NRRISDTSKKRRFKR). Residues 441 to 455 (MDSTPVDNETEQEQN) are compositionally biased toward polar residues. The Nuclear export signal motif lies at 472–480 (LLSPETLDL).

The protein belongs to the HSF family. Class A subfamily. Homotrimer. Interacts with HSP90-2. In terms of processing, exhibits temperature-dependent phosphorylation.

It is found in the cytoplasm. The protein localises to the nucleus. Its function is as follows. Transcriptional regulator that specifically binds DNA sequence 5'-AGAAnnTTCT-3' known as heat shock promoter elements (HSE). This Arabidopsis thaliana (Mouse-ear cress) protein is Heat stress transcription factor A-1d (HSFA1D).